Reading from the N-terminus, the 126-residue chain is Holo-[acyl-carrier-protein] synthase (126 aa).

Residues Asp9 and Glu57 each coordinate Mg(2+).

This sequence belongs to the P-Pant transferase superfamily. AcpS family. It depends on Mg(2+) as a cofactor.

It is found in the cytoplasm. The catalysed reaction is apo-[ACP] + CoA = holo-[ACP] + adenosine 3',5'-bisphosphate + H(+). Functionally, transfers the 4'-phosphopantetheine moiety from coenzyme A to a Ser of acyl-carrier-protein. This is Holo-[acyl-carrier-protein] synthase from Pseudoalteromonas atlantica (strain T6c / ATCC BAA-1087).